Reading from the N-terminus, the 195-residue chain is Peptidyl-tRNA hydrolase (195 aa).

Tyrosine 17 provides a ligand contact to tRNA. Histidine 22 acts as the Proton acceptor in catalysis. TRNA contacts are provided by phenylalanine 68, asparagine 70, and asparagine 116.

It belongs to the PTH family. In terms of assembly, monomer.

It is found in the cytoplasm. The enzyme catalyses an N-acyl-L-alpha-aminoacyl-tRNA + H2O = an N-acyl-L-amino acid + a tRNA + H(+). In terms of biological role, hydrolyzes ribosome-free peptidyl-tRNAs (with 1 or more amino acids incorporated), which drop off the ribosome during protein synthesis, or as a result of ribosome stalling. Catalyzes the release of premature peptidyl moieties from peptidyl-tRNA molecules trapped in stalled 50S ribosomal subunits, and thus maintains levels of free tRNAs and 50S ribosomes. This Shewanella loihica (strain ATCC BAA-1088 / PV-4) protein is Peptidyl-tRNA hydrolase.